Reading from the N-terminus, the 184-residue chain is Intraflagellar transport protein 22 homolog (184 aa).

GTP is bound by residues 10–17 (GPTESGKT), 62–66 (DCGGD), and 122–125 (KKPG).

Belongs to the small GTPase superfamily. Rab family.

This Xenopus tropicalis (Western clawed frog) protein is Intraflagellar transport protein 22 homolog (ift22).